The chain runs to 380 residues: Cytochrome b (380 aa).

4 helical membrane-spanning segments follow: residues 34–54 (FGSL…LLAM), 78–99 (WLIR…FLHI), 114–134 (WNTG…GYVL), and 179–199 (FFAL…THLM). 2 residues coordinate heme b: histidine 84 and histidine 98. Positions 183 and 197 each coordinate heme b. Histidine 202 contacts a ubiquinone. Helical transmembrane passes span 227 to 247 (LKDI…ALFS), 289 to 309 (LGGV…PFLH), 321 to 341 (LSQA…WVGS), and 348 to 368 (FIII…SLLP).

It belongs to the cytochrome b family. In terms of assembly, the cytochrome bc1 complex contains 11 subunits: 3 respiratory subunits (MT-CYB, CYC1 and UQCRFS1), 2 core proteins (UQCRC1 and UQCRC2) and 6 low-molecular weight proteins (UQCRH/QCR6, UQCRB/QCR7, UQCRQ/QCR8, UQCR10/QCR9, UQCR11/QCR10 and a cleavage product of UQCRFS1). This cytochrome bc1 complex then forms a dimer. The cofactor is heme b.

It localises to the mitochondrion inner membrane. Component of the ubiquinol-cytochrome c reductase complex (complex III or cytochrome b-c1 complex) that is part of the mitochondrial respiratory chain. The b-c1 complex mediates electron transfer from ubiquinol to cytochrome c. Contributes to the generation of a proton gradient across the mitochondrial membrane that is then used for ATP synthesis. The chain is Cytochrome b (MT-CYB) from Crossoptilon crossoptilon (White-eared pheasant).